We begin with the raw amino-acid sequence, 38 residues long: ADCVGDGQKCADWFGPYCCSGYYCSCRSMPYCRCRSDS.

Intrachain disulfides connect cysteine 3-cysteine 19, cysteine 10-cysteine 24, cysteine 18-cysteine 34, and cysteine 26-cysteine 32. Position 38 is a serine amide (serine 38).

It belongs to the neurotoxin 07 (Beta/delta-agtx) family. 02 (aga-3) subfamily. Expressed by the venom gland.

Its subcellular location is the secreted. Insecticidal neurotoxin that induces irreversible neuromuscular blockade in house crickets (A.domesticus). Modifies presynaptic voltage-gated sodium channels (Nav), causing them to open at the normal resting potential of the nerve. This leads to spontaneous release of neurotransmitter and repetitive action potentials in motor neurons. The polypeptide is Mu-agatoxin-Hc1c (Hololena curta (Funnel-web spider)).